Consider the following 639-residue polypeptide: Altered inheritance of mitochondria protein 9, mitochondrial (639 aa).

Residues 1–45 (MLMSKAPKLGNLLSKNSIKIVSGSKLRCNLKYINVRYISDTPDKV) constitute a mitochondrion transit peptide. The tract at residues 619–639 (VSSEAQSEVQSEVQSSTENKD) is disordered.

It belongs to the AIM9 family.

The protein resides in the mitochondrion. The sequence is that of Altered inheritance of mitochondria protein 9, mitochondrial (AIM9) from Vanderwaltozyma polyspora (strain ATCC 22028 / DSM 70294 / BCRC 21397 / CBS 2163 / NBRC 10782 / NRRL Y-8283 / UCD 57-17) (Kluyveromyces polysporus).